Consider the following 1941-residue polypeptide: WD repeat-containing protein 81 (1941 aa).

The disordered stretch occupies residues 1-27 (MAQGSGGREGALRTPAGGWHSPPSPDM). The tract at residues 1-650 (MAQGSGGREG…TPCEASWTRD (650 aa)) is necessary and sufficient for the interaction with SQSTM1. The BEACH domain occupies 337–614 (GQPTGQEELR…IPKLLVQTIQ (278 aa)). Disordered stretches follow at residues 618 to 637 (GRED…GRPV), 694 to 718 (VASA…EEGR), 1022 to 1074 (SKDL…VSFH), 1097 to 1217 (PQEA…EGKE), 1523 to 1556 (PSSR…DGHS), and 1569 to 1602 (QIPN…DNAL). Residues 1137–1146 (LRSGDSSQDL) are compositionally biased toward polar residues. Over residues 1151 to 1174 (GSEEEEEEEDSCVVLEEEEGEQEE) the composition is skewed to acidic residues. A compositionally biased stretch (gly residues) spans 1586 to 1595 (SGVGGGGLGS). WD repeat units lie at residues 1639-1677 (IRLQ…LWPL), 1686-1724 (ETAP…VWDP), 1729-1769 (TLRT…FVDC), 1777-1815 (EFRL…LLDT), 1819-1856 (LVLR…VWKE), 1860-1896 (KPTH…VCSL), and 1902-1941 (QATT…RLLA).

This sequence belongs to the WD repeat WDR81 family. In terms of assembly, interacts with WDR91; involved in early to late endosome cargo transport. Interacts with BECN1; negatively regulates the PI3 kinase/PI3K activity associated with endosomal membranes. Interacts with SQSTM1; the interaction is direct and regulates the interaction of SQSTM1 with ubiquitinated proteins. Interacts with MAP1LC3C; recruits MAP1LC3C to ubiquitinated protein aggregates in the aggrephagy process. In terms of tissue distribution, widely expressed. In the brain, highest levels in cerebellum and corpus callosum.

The protein resides in the early endosome membrane. It localises to the late endosome membrane. It is found in the lysosome membrane. Its subcellular location is the cytoplasmic vesicle. The protein localises to the autophagosome membrane. The protein resides in the mitochondrion. It localises to the cytoplasm. It is found in the cytosol. Its function is as follows. Functions as a negative regulator of the PI3 kinase/PI3K activity associated with endosomal membranes via BECN1, a core subunit of the PI3K complex. By modifying the phosphatidylinositol 3-phosphate/PtdInsP3 content of endosomal membranes may regulate endosome fusion, recycling, sorting and early to late endosome transport. It is for instance, required for the delivery of cargos like BST2/tetherin from early to late endosome and thereby participates indirectly to their degradation by the lysosome. May also play a role in aggrephagy, the macroautophagic degradation of ubiquitinated protein aggregates. In this process, may regulate the interaction of SQSTM1 with ubiquitinated proteins and also recruit MAP1LC3C. May also be involved in maintenance of normal mitochondrial structure and organization. The polypeptide is WD repeat-containing protein 81 (Homo sapiens (Human)).